The following is a 1058-amino-acid chain: Carbamoyl phosphate synthase large chain (1058 aa).

Positions 1–401 (MPKRKDIQKI…SLLKACRSLE (401 aa)) are carboxyphosphate synthetic domain. ATP-binding residues include Arg129, Arg169, Gly175, Gly176, Arg208, Ile210, Glu215, Gly241, Ile242, His243, Gln284, and Glu298. The region spanning 133 to 327 (KQLMQELDQP…IAKLAAKIAV (195 aa)) is the ATP-grasp 1 domain. Residues Gln284, Glu298, and Asn300 each coordinate Mg(2+). Gln284, Glu298, and Asn300 together coordinate Mn(2+). The interval 402–546 (IGVCHNEMTS…YSTYELENES (145 aa)) is oligomerization domain. Residues 547–929 (VQSNKESILV…ALYKAFEANN (383 aa)) are carbamoyl phosphate synthetic domain. Positions 671 to 861 (EKALKELGIP…MAQIATKLIL (191 aa)) constitute an ATP-grasp 2 domain. 10 residues coordinate ATP: Arg707, Ser746, Ile748, Glu752, Gly777, Val778, His779, Ser780, Gln820, and Glu832. 3 residues coordinate Mg(2+): Gln820, Glu832, and Asn834. Residues Gln820, Glu832, and Asn834 each coordinate Mn(2+). The 129-residue stretch at 930–1058 (SHLSEFGQIV…ESRCFNIEAI (129 aa)) folds into the MGS-like domain. The interval 930-1058 (SHLSEFGQIV…ESRCFNIEAI (129 aa)) is allosteric domain.

The protein belongs to the CarB family. Composed of two chains; the small (or glutamine) chain promotes the hydrolysis of glutamine to ammonia, which is used by the large (or ammonia) chain to synthesize carbamoyl phosphate. Tetramer of heterodimers (alpha,beta)4. It depends on Mg(2+) as a cofactor. Mn(2+) is required as a cofactor.

The catalysed reaction is hydrogencarbonate + L-glutamine + 2 ATP + H2O = carbamoyl phosphate + L-glutamate + 2 ADP + phosphate + 2 H(+). The enzyme catalyses hydrogencarbonate + NH4(+) + 2 ATP = carbamoyl phosphate + 2 ADP + phosphate + 2 H(+). It functions in the pathway amino-acid biosynthesis; L-arginine biosynthesis; carbamoyl phosphate from bicarbonate: step 1/1. It participates in pyrimidine metabolism; UMP biosynthesis via de novo pathway; (S)-dihydroorotate from bicarbonate: step 1/3. Its function is as follows. Large subunit of the glutamine-dependent carbamoyl phosphate synthetase (CPSase). CPSase catalyzes the formation of carbamoyl phosphate from the ammonia moiety of glutamine, carbonate, and phosphate donated by ATP, constituting the first step of 2 biosynthetic pathways, one leading to arginine and/or urea and the other to pyrimidine nucleotides. The large subunit (synthetase) binds the substrates ammonia (free or transferred from glutamine from the small subunit), hydrogencarbonate and ATP and carries out an ATP-coupled ligase reaction, activating hydrogencarbonate by forming carboxy phosphate which reacts with ammonia to form carbamoyl phosphate. The sequence is that of Carbamoyl phosphate synthase large chain from Streptococcus pyogenes serotype M1.